The primary structure comprises 433 residues: KICSTOR complex protein ITFG2 (433 aa).

One copy of the FG-GAP 1; atypical repeat lies at 19–48 (FPHAICLGDVDNDTLNELVVGDTSGKVSVY). Position 104 is a phosphoserine (Ser-104). The stretch at 126–155 (NTKVMLISDIDGDGCRELVVGYTDRVVRAF) is one FG-GAP 2; atypical repeat. Ser-220 carries the phosphoserine modification.

Part of the KICSTOR complex composed of KPTN, ITFG2, KICS2 and SZT2. SZT2 probably serves as a link between the other three proteins in the KICSTOR complex and may mediate the direct interaction with the GATOR complex via GATOR1. The KICSTOR complex interacts directly with the GATOR1 complex and most probably indirectly with the GATOR2 complex in an amino acid-independent manner.

The protein localises to the lysosome membrane. As part of the KICSTOR complex functions in the amino acid-sensing branch of the TORC1 signaling pathway. Recruits, in an amino acid-independent manner, the GATOR1 complex to the lysosomal membranes and allows its interaction with GATOR2 and the RAG GTPases. Functions upstream of the RAG GTPases and is required to negatively regulate mTORC1 signaling in absence of amino acids. In absence of the KICSTOR complex mTORC1 is constitutively localized to the lysosome and activated. The KICSTOR complex is also probably involved in the regulation of mTORC1 by glucose. The polypeptide is KICSTOR complex protein ITFG2 (Pongo abelii (Sumatran orangutan)).